A 411-amino-acid polypeptide reads, in one-letter code: Mitogen-activated protein kinase 8 (411 aa).

The Protein kinase domain occupies 26–321; the sequence is YQNLKPIGSG…VDEALQHPYI (296 aa). Residues 32 to 40 and lysine 55 contribute to the ATP site; that span reads IGSGAQGIV. Residue cysteine 116 is modified to S-nitrosocysteine; in inhibited form. Catalysis depends on aspartate 151, which acts as the Proton acceptor. Threonine 183 carries the post-translational modification Phosphothreonine; by MAP2K7. The TXY signature appears at 183–185; it reads TPY. Tyrosine 185 is subject to Phosphotyrosine; by MAP2K4. The interval 368 to 411 is disordered; the sequence is KNGVIRGQPSPLGAAVINGSQHPVSSPSVNDMSSMSTDPTLASD. A Phosphoserine modification is found at serine 377. Residues 390–403 show a composition bias toward low complexity; sequence PVSSPSVNDMSSMS.

The protein belongs to the protein kinase superfamily. CMGC Ser/Thr protein kinase family. MAP kinase subfamily. Forms a complex with MAPK8IP1 and ARHGEF28. Found in a complex with SH3RF1, RAC1, MAP3K11/MLK3, MAP2K7/MKK7 and MAPK8IP1/JIP1. Found in a complex with SH3RF1, RAC2, MAP3K7/TAK1, MAP2K7/MKK7, MAPK8IP1/JIP1 and MAPK9/JNK2. Binds to at least four scaffolding proteins, MAPK8IP1/JIP-1, MAPK8IP2/JIP-2, MAPK8IP3/JIP-3/JSAP1 and SPAG9/MAPK8IP4/JIP-4. These proteins also bind other components of the JNK signaling pathway. Interacts with TP53, WWOX. Interacts with JAMP. Interacts with NFATC4. Interacts (phosphorylated form) with NFE2; the interaction phosphorylates NFE2 in undifferentiated cells. Interacts with MECOM; regulates JNK signaling. Interacts with PIN1; this interaction mediates MAPK8 conformational changes leading to the binding of MAPK8 to its substrates. Interacts with HSF1 (via D domain and preferentially with hyperphosphorylated form); this interaction occurs under both normal growth conditions and immediately upon heat shock. Interacts with STMN2, STMN3 and STMN4. Interacts with GRIPAP1. Interacts with POU5F1; phosphorylates POU5F1 at 'Ser-347'. Interacts with HSF4. The cofactor is Mg(2+). Dually phosphorylated on Thr-183 and Tyr-185 by MAP2K7 and MAP2K4, which activates the enzyme. Phosphorylated by TAOK2. Phosphorylated form is more concentrated at synapses than none-phosphorylated. Post-translationally, nitrosylated upon IFN-gamma-induced endogenous NO production, which inhibits the enzyme. May be phosphorylated at Thr-183 and Tyr-185 by MAP3K1/MEKK1.

It localises to the cytoplasm. The protein resides in the nucleus. Its subcellular location is the synapse. The catalysed reaction is L-seryl-[protein] + ATP = O-phospho-L-seryl-[protein] + ADP + H(+). The enzyme catalyses L-threonyl-[protein] + ATP = O-phospho-L-threonyl-[protein] + ADP + H(+). Activated by threonine and tyrosine phosphorylation by either of two dual specificity kinases, MAP2K4 and MAP2K7. MAP2K4 shows a strong preference for Tyr-185 while MAP2K7 phosphorylates Tyr-183 preferentially. Inhibited by dual specificity phosphatases, such as DUSP1. Inhibited by SERPINB3. Inhibited by IFN-gamma-induced S-nitrosylation. In terms of biological role, serine/threonine-protein kinase involved in various processes such as cell proliferation, differentiation, migration, transformation and programmed cell death. Extracellular stimuli such as pro-inflammatory cytokines or physical stress stimulate the stress-activated protein kinase/c-Jun N-terminal kinase (SAP/JNK) signaling pathway. In this cascade, two dual specificity kinases MAP2K4/MKK4 and MAP2K7/MKK7 phosphorylate and activate MAPK8/JNK1. In turn, MAPK8/JNK1 phosphorylates a number of transcription factors, primarily components of AP-1 such as JUN, JDP2 and ATF2 and thus regulates AP-1 transcriptional activity. Phosphorylates the replication licensing factor CDT1, inhibiting the interaction between CDT1 and the histone H4 acetylase HBO1 to replication origins. Loss of this interaction abrogates the acetylation required for replication initiation. Promotes stressed cell apoptosis by phosphorylating key regulatory factors including p53/TP53 and Yes-associates protein YAP1. In T-cells, MAPK8 and MAPK9 are required for polarized differentiation of T-helper cells into Th1 cells. Contributes to the survival of erythroid cells by phosphorylating the antagonist of cell death BAD upon EPO stimulation. Mediates starvation-induced BCL2 phosphorylation, BCL2 dissociation from BECN1, and thus activation of autophagy. Phosphorylates STMN2 and hence regulates microtubule dynamics, controlling neurite elongation in cortical neurons. In the developing brain, through its cytoplasmic activity on STMN2, negatively regulates the rate of exit from multipolar stage and of radial migration from the ventricular zone. Phosphorylates several other substrates including heat shock factor protein 4 (HSF4), the deacetylase SIRT1, ELK1, or the E3 ligase ITCH. Phosphorylates the CLOCK-BMAL1 heterodimer and plays a role in the regulation of the circadian clock. Phosphorylates the heat shock transcription factor HSF1, suppressing HSF1-induced transcriptional activity. Phosphorylates POU5F1, which results in the inhibition of POU5F1's transcriptional activity and enhances its proteasomal degradation. Phosphorylates JUND and this phosphorylation is inhibited in the presence of MEN1. In neurons, phosphorylates SYT4 which captures neuronal dense core vesicles at synapses. Phosphorylates EIF4ENIF1/4-ET in response to oxidative stress, promoting P-body assembly. Phosphorylates SIRT6 in response to oxidative stress, stimulating its mono-ADP-ribosyltransferase activity. Phosphorylates NLRP3, promoting assembly of the NLRP3 inflammasome. Phosphorylates ALKBH5 in response to reactive oxygen species (ROS), promoting ALKBH5 sumoylation and inactivation. This Rattus norvegicus (Rat) protein is Mitogen-activated protein kinase 8 (Mapk8).